The following is a 538-amino-acid chain: Syncytin-1 (538 aa).

A signal peptide spans 1–20 (MALPYHIFLFTVLLPSFTLT). Residues 31 to 443 (SSPYQEFLWR…NIGPWGLLSQ (413 aa)) lie on the Extracellular side of the membrane. The N-linked (GlcNAc...) asparagine glycan is linked to Asn-169. Residues 186 to 189 (CWMC) carry the CXXC motif. Cystine bridges form between Cys-186/Cys-189, Cys-186/Cys-405, and Cys-397/Cys-404. 5 N-linked (GlcNAc...) asparagine glycosylation sites follow: Asn-208, Asn-214, Asn-234, Asn-242, and Asn-281. Residues 320–340 (ILPFVMGAGVLGALGTGIGSI) are fusion peptide. Residues 380-396 (LQNRRALDLLTAERGGT) form an immunosuppression region. The CX6CC motif lies at 397-405 (CLFLGEECC). N-linked (GlcNAc...) asparagine glycosylation is present at Asn-409. Residues 444 to 464 (WMPWILPFLGPLAAIILLLLF) form a helical membrane-spanning segment. Residues 465 to 484 (GPCIFNLLVNFVSSRIEAIK) are essential for the fusiogenic function. At 465-538 (GPCIFNLLVN…LLRPNSAGSS (74 aa)) the chain is on the cytoplasmic side. The disordered stretch occupies residues 494 to 538 (KTKNYRRSLDWPASPRSDVNDIKGIPPEEISTAQPLLRPNSAGSS).

Belongs to the gamma type-C retroviral envelope protein family. HERV class-I W env subfamily. As to quaternary structure, the mature envelope protein (Env) consists of a trimer of SU-TM heterodimers attached probably by a labile interchain disulfide bond. Interacts with the C-type lectin CD209/DC-SIGN. Post-translationally, specific enzymatic cleavages in vivo yield mature proteins. Envelope glycoproteins are synthesized as an inactive precursor that is heavily N-glycosylated and processed likely by furin in the Golgi to yield the mature SU and TM proteins. The cleavage site between SU and TM requires the minimal sequence [KR]-X-[KR]-R. The CXXC motif is highly conserved across a broad range of retroviral envelope proteins. It is thought to participate in the formation of a labile disulfide bond possibly with the CX6CC motif present in the transmembrane protein.

The protein resides in the cell membrane. The protein localises to the virion. This endogenous retroviral envelope protein has retained its original fusogenic properties and participates in trophoblast fusion and the formation of a syncytium during placenta morphogenesis. May recognize and induce fusion through binding of SLC1A4 and SLC1A5. Its function is as follows. Endogenous envelope proteins may have kept, lost or modified their original function during evolution. Retroviral envelope proteins mediate receptor recognition and membrane fusion during early infection. The surface protein (SU) mediates receptor recognition, while the transmembrane protein (TM) acts as a class I viral fusion protein. The protein may have at least 3 conformational states: pre-fusion native state, pre-hairpin intermediate state, and post-fusion hairpin state. During viral and target cell membrane fusion, the coiled coil regions (heptad repeats) assume a trimer-of-hairpins structure, positioning the fusion peptide in close proximity to the C-terminal region of the ectodomain. The formation of this structure appears to drive apposition and subsequent fusion of membranes. In Hylobates pileatus (Pileated gibbon), this protein is Syncytin-1 (ERVW-1).